The primary structure comprises 428 residues: Dihydroorotase (428 aa).

Zn(2+)-binding residues include His59 and His61. Substrate is bound by residues 61 to 63 (HLR) and Asn93. Residues Asp151, His178, and His231 each contribute to the Zn(2+) site. Asn277 serves as a coordination point for substrate. Position 304 (Asp304) interacts with Zn(2+). The active site involves Asp304. Residues His308 and 322-323 (FG) each bind substrate.

It belongs to the metallo-dependent hydrolases superfamily. DHOase family. Class I DHOase subfamily. Zn(2+) is required as a cofactor.

The enzyme catalyses (S)-dihydroorotate + H2O = N-carbamoyl-L-aspartate + H(+). Its pathway is pyrimidine metabolism; UMP biosynthesis via de novo pathway; (S)-dihydroorotate from bicarbonate: step 3/3. Its function is as follows. Catalyzes the reversible cyclization of carbamoyl aspartate to dihydroorotate. The polypeptide is Dihydroorotase (Bacillus cereus (strain AH187)).